The sequence spans 152 residues: Sulfur-rich protein (152 aa).

Residues 1–11 (MSTTPIVSGVT) are compositionally biased toward polar residues. The disordered stretch occupies residues 1–21 (MSTTPIVSGVTSQNNSSENVS). The span at 12-21 (SQNNSSENVS) shows a compositional bias: low complexity. Transmembrane regions (helical) follow at residues 44–64 (VGLA…LFIL) and 73–93 (IYLA…ILSM).

The protein localises to the membrane. The protein is Sulfur-rich protein (srp) of Chlamydia muridarum (strain MoPn / Nigg).